We begin with the raw amino-acid sequence, 110 residues long: MLAAAPLLLASGNGFATTGPAAKPAVKPVTESRGEILSLSCAGCHGTDGNSSSVIPSIYGKSPEYIETALIDFKNGSRTSTVMGRHAKGYTGEEIHLIAEYFGNLSKKNH.

An N-terminal signal peptide occupies residues 1–16; that stretch reads MLAAAPLLLASGNGFA. Heme c is bound by residues C41, C44, H45, and M83.

In terms of assembly, dimer of one cytochrome and one flavoprotein. Post-translationally, binds 1 heme c group covalently per subunit.

The protein localises to the periplasm. Monoheme cytochrome that function as the electron transport subunit of sulfide dehydrogenase. The chain is Cytochrome subunit of sulfide dehydrogenase (fccA) from Chlorobaculum tepidum (strain ATCC 49652 / DSM 12025 / NBRC 103806 / TLS) (Chlorobium tepidum).